We begin with the raw amino-acid sequence, 223 residues long: Ribose-5-phosphate isomerase A (223 aa).

Residues 26–29 (TGST), 82–85 (DGAD), and 95–98 (KGGG) each bind substrate. The active-site Proton acceptor is the Glu-104. Substrate is bound at residue Lys-122.

It belongs to the ribose 5-phosphate isomerase family. As to quaternary structure, homodimer.

The enzyme catalyses aldehydo-D-ribose 5-phosphate = D-ribulose 5-phosphate. It participates in carbohydrate degradation; pentose phosphate pathway; D-ribose 5-phosphate from D-ribulose 5-phosphate (non-oxidative stage): step 1/1. Its function is as follows. Catalyzes the reversible conversion of ribose-5-phosphate to ribulose 5-phosphate. This Streptococcus agalactiae serotype III (strain NEM316) protein is Ribose-5-phosphate isomerase A.